A 461-amino-acid chain; its full sequence is tRNA(Ile)-lysidine synthase (461 aa).

26 to 31 contacts ATP; it reads SGGPDS.

It belongs to the tRNA(Ile)-lysidine synthase family.

Its subcellular location is the cytoplasm. It catalyses the reaction cytidine(34) in tRNA(Ile2) + L-lysine + ATP = lysidine(34) in tRNA(Ile2) + AMP + diphosphate + H(+). Its function is as follows. Ligates lysine onto the cytidine present at position 34 of the AUA codon-specific tRNA(Ile) that contains the anticodon CAU, in an ATP-dependent manner. Cytidine is converted to lysidine, thus changing the amino acid specificity of the tRNA from methionine to isoleucine. This chain is tRNA(Ile)-lysidine synthase, found in Clostridium acetobutylicum (strain ATCC 824 / DSM 792 / JCM 1419 / IAM 19013 / LMG 5710 / NBRC 13948 / NRRL B-527 / VKM B-1787 / 2291 / W).